The following is a 153-amino-acid chain: Ribonuclease H (153 aa).

The RNase H type-1 domain occupies 1–142 (MLKTIKIFSD…CDHLARESAK (142 aa)). Mg(2+) is bound by residues aspartate 10, glutamate 48, aspartate 70, and aspartate 134.

It belongs to the RNase H family. As to quaternary structure, monomer. It depends on Mg(2+) as a cofactor.

The protein localises to the cytoplasm. It catalyses the reaction Endonucleolytic cleavage to 5'-phosphomonoester.. Its function is as follows. Endonuclease that specifically degrades the RNA of RNA-DNA hybrids. This is Ribonuclease H from Buchnera aphidicola subsp. Baizongia pistaciae (strain Bp).